A 276-amino-acid chain; its full sequence is Elongation factor Ts, mitochondrial (276 aa).

This sequence belongs to the EF-Ts family.

Its subcellular location is the mitochondrion. In terms of biological role, associates with the EF-Tu.GDP complex and induces the exchange of GDP to GTP. It remains bound to the aminoacyl-tRNA.EF-Tu.GTP complex up to the GTP hydrolysis stage on the ribosome. The polypeptide is Elongation factor Ts, mitochondrial (Leishmania major).